Here is a 130-residue protein sequence, read N- to C-terminus: Small ribosomal subunit protein uS8 (130 aa).

Belongs to the universal ribosomal protein uS8 family. Part of the 30S ribosomal subunit.

One of the primary rRNA binding proteins, it binds directly to 16S rRNA central domain where it helps coordinate assembly of the platform of the 30S subunit. The protein is Small ribosomal subunit protein uS8 of Pyrobaculum islandicum (strain DSM 4184 / JCM 9189 / GEO3).